Here is a 161-residue protein sequence, read N- to C-terminus: ATP synthase subunit b 1 (161 aa).

A helical transmembrane segment spans residues 5–25 (AETWVAVAFVLMVALFIYFGA).

Belongs to the ATPase B chain family. As to quaternary structure, F-type ATPases have 2 components, F(1) - the catalytic core - and F(0) - the membrane proton channel. F(1) has five subunits: alpha(3), beta(3), gamma(1), delta(1), epsilon(1). F(0) has three main subunits: a(1), b(2) and c(10-14). The alpha and beta chains form an alternating ring which encloses part of the gamma chain. F(1) is attached to F(0) by a central stalk formed by the gamma and epsilon chains, while a peripheral stalk is formed by the delta and b chains.

Its subcellular location is the cell inner membrane. Its function is as follows. F(1)F(0) ATP synthase produces ATP from ADP in the presence of a proton or sodium gradient. F-type ATPases consist of two structural domains, F(1) containing the extramembraneous catalytic core and F(0) containing the membrane proton channel, linked together by a central stalk and a peripheral stalk. During catalysis, ATP synthesis in the catalytic domain of F(1) is coupled via a rotary mechanism of the central stalk subunits to proton translocation. In terms of biological role, component of the F(0) channel, it forms part of the peripheral stalk, linking F(1) to F(0). The sequence is that of ATP synthase subunit b 1 from Afipia carboxidovorans (strain ATCC 49405 / DSM 1227 / KCTC 32145 / OM5) (Oligotropha carboxidovorans).